Consider the following 254-residue polypeptide: Ribosomal RNA large subunit methyltransferase E (254 aa).

Positions 1–18 (MTNSGKTGGKSGKGGTGG) are enriched in gly residues. The segment at 1 to 26 (MTNSGKTGGKSGKGGTGGARALKVRV) is disordered. Gly89, Trp91, Asp119, Asp135, and Asp159 together coordinate S-adenosyl-L-methionine. Lys199 (proton acceptor) is an active-site residue.

It belongs to the class I-like SAM-binding methyltransferase superfamily. RNA methyltransferase RlmE family.

Its subcellular location is the cytoplasm. It catalyses the reaction uridine(2552) in 23S rRNA + S-adenosyl-L-methionine = 2'-O-methyluridine(2552) in 23S rRNA + S-adenosyl-L-homocysteine + H(+). Functionally, specifically methylates the uridine in position 2552 of 23S rRNA at the 2'-O position of the ribose in the fully assembled 50S ribosomal subunit. This chain is Ribosomal RNA large subunit methyltransferase E, found in Parvibaculum lavamentivorans (strain DS-1 / DSM 13023 / NCIMB 13966).